Here is a 242-residue protein sequence, read N- to C-terminus: 1-(5-phosphoribosyl)-5-[(5-phosphoribosylamino)methylideneamino] imidazole-4-carboxamide isomerase (242 aa).

Aspartate 8 serves as the catalytic Proton acceptor. Aspartate 129 acts as the Proton donor in catalysis.

It belongs to the HisA/HisF family.

Its subcellular location is the cytoplasm. It catalyses the reaction 1-(5-phospho-beta-D-ribosyl)-5-[(5-phospho-beta-D-ribosylamino)methylideneamino]imidazole-4-carboxamide = 5-[(5-phospho-1-deoxy-D-ribulos-1-ylimino)methylamino]-1-(5-phospho-beta-D-ribosyl)imidazole-4-carboxamide. It participates in amino-acid biosynthesis; L-histidine biosynthesis; L-histidine from 5-phospho-alpha-D-ribose 1-diphosphate: step 4/9. This is 1-(5-phosphoribosyl)-5-[(5-phosphoribosylamino)methylideneamino] imidazole-4-carboxamide isomerase from Clostridium botulinum (strain Okra / Type B1).